Reading from the N-terminus, the 614-residue chain is Dolichyl-diphosphooligosaccharide--protein glycosyltransferase subunit 1A (614 aa).

The first 25 residues, 1–25, serve as a signal peptide directing secretion; the sequence is MKQSSVVDLLLLLLAIALLATPAFS. Over 26–432 the chain is Lumenal; sequence DLVLSKVERR…QVYYKFSNIN (407 aa). 2 N-linked (GlcNAc...) asparagine glycosylation sites follow: Asn94 and Asn299. Residue Lys311 forms a Glycyl lysine isopeptide (Lys-Gly) (interchain with G-Cter in ubiquitin) linkage. N-linked (GlcNAc...) asparagine glycosylation occurs at Asn352. The chain crosses the membrane as a helical span at residues 433 to 453; that stretch reads LLSEPLMLISGFFILFITCII. The Cytoplasmic portion of the chain corresponds to 454 to 614; it reads YTRADISISK…EDLLEFIDEI (161 aa).

The protein belongs to the OST1 family. As to quaternary structure, component of the oligosaccharyltransferase (OST) complex.

The protein resides in the endoplasmic reticulum membrane. It participates in protein modification; protein glycosylation. Functionally, subunit of the oligosaccharyl transferase (OST) complex that catalyzes the initial transfer of a defined glycan (Glc(3)Man(9)GlcNAc(2) in eukaryotes) from the lipid carrier dolichol-pyrophosphate to an asparagine residue within an Asn-X-Ser/Thr consensus motif in nascent polypeptide chains, the first step in protein N-glycosylation. N-glycosylation occurs cotranslationally and the complex associates with the Sec61 complex at the channel-forming translocon complex that mediates protein translocation across the endoplasmic reticulum (ER). All subunits are required for a maximal enzyme activity. The sequence is that of Dolichyl-diphosphooligosaccharide--protein glycosyltransferase subunit 1A (OST1A) from Arabidopsis thaliana (Mouse-ear cress).